Consider the following 343-residue polypeptide: Phenylalanine--tRNA ligase alpha subunit (343 aa).

E256 provides a ligand contact to Mg(2+).

Belongs to the class-II aminoacyl-tRNA synthetase family. Phe-tRNA synthetase alpha subunit type 1 subfamily. As to quaternary structure, tetramer of two alpha and two beta subunits. The cofactor is Mg(2+).

Its subcellular location is the cytoplasm. The enzyme catalyses tRNA(Phe) + L-phenylalanine + ATP = L-phenylalanyl-tRNA(Phe) + AMP + diphosphate + H(+). This chain is Phenylalanine--tRNA ligase alpha subunit, found in Prosthecochloris aestuarii (strain DSM 271 / SK 413).